The chain runs to 421 residues: Periplasmic [Fe] hydrogenase large subunit (421 aa).

2 consecutive 4Fe-4S ferredoxin-type domains span residues 26–57 (HFVQ…MGEP) and 59–86 (SIPH…EAQS). Residues cysteine 35, cysteine 38, cysteine 41, cysteine 45, cysteine 66, cysteine 69, cysteine 72, cysteine 76, cysteine 179, cysteine 234, cysteine 378, and cysteine 382 each coordinate [4Fe-4S] cluster. Residue cysteine 382 coordinates Fe(2+).

As to quaternary structure, heterodimer of a large and a small subunit. Requires [4Fe-4S] cluster as cofactor. It depends on Fe(2+) as a cofactor.

The protein localises to the periplasm. The enzyme catalyses H2 + 2 oxidized [2Fe-2S]-[ferredoxin] = 2 reduced [2Fe-2S]-[ferredoxin] + 2 H(+). Its function is as follows. May be involved in hydrogen uptake for the reduction of sulfate to hydrogen sulfide in an electron transport chain. Cytochrome c3 is likely to be the physiological electron carrier for the enzyme. The chain is Periplasmic [Fe] hydrogenase large subunit (hydA) from Nitratidesulfovibrio vulgaris (strain ATCC 29579 / DSM 644 / CCUG 34227 / NCIMB 8303 / VKM B-1760 / Hildenborough) (Desulfovibrio vulgaris).